The sequence spans 708 residues: O-antigen chain terminator bifunctional methyltransferase/kinase WbdD (708 aa).

Residues 1–210 (MTKDLNTLVS…VPRPMYLVSN (210 aa)) form a methyltransferase region. S-adenosyl-L-methionine contacts are provided by residues 16–17 (YQ), arginine 36, glycine 61, 82–87 (DFQQEN), 108–111 (GRIE), and leucine 128. Positions 211–459 (HRVLINDFNQ…AKLPSAEQQR (249 aa)) are kinase. ATP-binding positions include proline 229, histidine 237, 241-243 (RRY), lysine 252, glutamate 274, 309-311 (EKL), methionine 358, and aspartate 369. Positions 485–594 (AGSEALRGQI…EIEKIHRSRS (110 aa)) form a coiled coil. The required for membrane-binding stretch occupies residues 601–669 (YRYLGLQIHL…RLYRRMNPLP (69 aa)). Positions 687–708 (VMHPELLPPEVYEIYLKLTKNK) are required for localizing WbdA to the membrane.

It belongs to the WbdD family. As to quaternary structure, interacts with WbdA.

It localises to the cell inner membrane. The enzyme catalyses 3-O-phospho-alpha-D-Man-(1-&gt;2)-alpha-D-Man-(1-&gt;2)-[alpha-D-Man-(1-&gt;3)-alpha-D-Man-(1-&gt;3)-alpha-D-Man-(1-&gt;2)-alpha-D-Man-(1-&gt;2)](n)-alpha-D-Man-(1-&gt;3)-alpha-D-Man-(1-&gt;3)-alpha-D-Man-(1-&gt;3)-alpha-D-GlcNAc-di-trans,octa-cis-undecaprenyl diphosphate + S-adenosyl-L-methionine = 3-O-methylphospho-alpha-D-Man-(1-&gt;2)-alpha-D-Man-(1-&gt;2)-[alpha-D-Man-(1-&gt;3)-alpha-D-Man-(1-&gt;3)-alpha-D-Man-(1-&gt;2)-alpha-D-Man-(1-&gt;2)](n)-alpha-D-Man-(1-&gt;3)-alpha-D-Man-(1-&gt;3)-alpha-D-Man-(1-&gt;3)-alpha-D-GlcNAc-di-trans,octa-cis-undecaprenyl diphosphate + S-adenosyl-L-homocysteine. It carries out the reaction alpha-D-Man-(1-&gt;2)-alpha-D-Man-(1-&gt;2)-[alpha-D-Man-(1-&gt;3)-alpha-D-Man-(1-&gt;3)-alpha-D-Man-(1-&gt;2)-alpha-D-Man-(1-&gt;2)](n)-alpha-D-Man-(1-&gt;3)-alpha-D-Man-(1-&gt;3)-alpha-D-Man-(1-&gt;3)-alpha-D-GlcNAc-di-trans,octa-cis-undecaprenyl diphosphate + ATP = 3-O-phospho-alpha-D-Man-(1-&gt;2)-alpha-D-Man-(1-&gt;2)-[alpha-D-Man-(1-&gt;3)-alpha-D-Man-(1-&gt;3)-alpha-D-Man-(1-&gt;2)-alpha-D-Man-(1-&gt;2)](n)-alpha-D-Man-(1-&gt;3)-alpha-D-Man-(1-&gt;3)-alpha-D-Man-(1-&gt;3)-alpha-D-GlcNAc-di-trans,octa-cis-undecaprenyl diphosphate + ADP + H(+). It participates in bacterial outer membrane biogenesis; LPS O-antigen biosynthesis. In terms of biological role, regulates the length of the LPS O-antigen polysaccharide chain. Stops the polymerization of the chain by phosphorylating and then methylating the phosphate on the terminal sugar. This terminal modification is essential for export of the O-antigen across the inner membrane. WbdD is also required for correct localization of the WbdA mannosyltransferase. The chain is O-antigen chain terminator bifunctional methyltransferase/kinase WbdD from Escherichia coli.